The primary structure comprises 301 residues: Probable alpha-L-glutamate ligase (301 aa).

In terms of domain architecture, ATP-grasp spans 104 to 287; the sequence is LQLLSRRGIG…VAGMIIEHLE (184 aa). Residues Lys141, 178–179, Asp187, and 211–213 contribute to the ATP site; these read EY and RSN. Mg(2+)-binding residues include Asp248, Glu260, and Asn262. Positions 248, 260, and 262 each coordinate Mn(2+).

It belongs to the RimK family. Mg(2+) serves as cofactor. The cofactor is Mn(2+).

The protein is Probable alpha-L-glutamate ligase of Pseudomonas putida (strain ATCC 700007 / DSM 6899 / JCM 31910 / BCRC 17059 / LMG 24140 / F1).